A 457-amino-acid chain; its full sequence is Variant surface glycoprotein 20 (457 aa).

A signal peptide spans 1 to 20 (MFTQAVIALIGLVSIRTGKT). Residues 385–397 (RQTASGDDQSAEN) show a composition bias toward polar residues. The interval 385-406 (RQTASGDDQSAENQCGGKKEDE) is disordered. A glycan (N-linked (GlcNAc...) asparagine) is linked at Asn436. Ser440 is lipidated: GPI-anchor amidated serine. The propeptide at 441–457 (NSFVIKKAPLWLAFLLF) is removed in mature form.

It localises to the cell membrane. Its function is as follows. VSG forms a coat on the surface of the parasite. The trypanosome evades the immune response of the host by expressing a series of antigenically distinct VSGs from an estimated 1000 VSG genes. The protein is Variant surface glycoprotein 20 of Trypanosoma equiperdum.